Reading from the N-terminus, the 271-residue chain is MIMGQYLFWLANAHEPIENRIPELPNFISVLYHRFQHTTWAQFLHRWENIIFAILVASLISLVAYLGARKKEIIPSKFQNLLEIAVEKFSHLILEVLGPEGKAYIPFLGTLFIYIFTMNIFGMVPLMKAPSSSLNITAALAICVFCLVQFLNIRNMGIFGFLYHLAGSPKSMLEWLLAPLMFSLEIISQLSRPLTLALRLFGNVLGEDILIGTFALMGVVMISSVETFVGIPLQLPFMFLGLLTSFMQALVFTLLSTVYILLSMHKEGEKN.

Transmembrane regions (helical) follow at residues 47-67 (WENI…AYLG), 107-127 (FLGT…VPLM), 133-153 (SLNI…FLNI), 209-229 (ILIG…ETFV), and 235-255 (LPFM…FTLL).

This sequence belongs to the ATPase A chain family. As to quaternary structure, F-type ATPases have 2 components, CF(1) - the catalytic core - and CF(0) - the membrane proton channel. CF(1) has five subunits: alpha(3), beta(3), gamma(1), delta(1), epsilon(1). CF(0) has three main subunits: a(1), b(2) and c(9-12). The alpha and beta chains form an alternating ring which encloses part of the gamma chain. CF(1) is attached to CF(0) by a central stalk formed by the gamma and epsilon chains, while a peripheral stalk is formed by the delta and b chains.

Its subcellular location is the cell inner membrane. Functionally, key component of the proton channel; it plays a direct role in the translocation of protons across the membrane. The polypeptide is ATP synthase subunit a (Protochlamydia amoebophila (strain UWE25)).